A 180-amino-acid chain; its full sequence is ATP-dependent protease subunit HslV (180 aa).

The active site involves Thr-7. Residues Ala-165, Cys-168, and Thr-171 each contribute to the Na(+) site.

Belongs to the peptidase T1B family. HslV subfamily. A double ring-shaped homohexamer of HslV is capped on each side by a ring-shaped HslU homohexamer. The assembly of the HslU/HslV complex is dependent on binding of ATP.

Its subcellular location is the cytoplasm. The catalysed reaction is ATP-dependent cleavage of peptide bonds with broad specificity.. Its activity is regulated as follows. Allosterically activated by HslU binding. Its function is as follows. Protease subunit of a proteasome-like degradation complex believed to be a general protein degrading machinery. This chain is ATP-dependent protease subunit HslV, found in Geobacillus sp. (strain WCH70).